Consider the following 375-residue polypeptide: Meiotic driver cw27 (375 aa).

2 disordered regions span residues 1 to 42 and 74 to 103; these read MKNK…STLP and DYDE…GTTD. Basic and acidic residues predominate over residues 11-29; the sequence is SMDELSTKNDNEIDLEKGP. The next 7 membrane-spanning stretches (helical) occupy residues 108–128, 145–165, 172–192, 208–228, 245–265, 272–292, and 336–356; these read FLIK…PAVC, WTLI…SWCF, AVKV…ISLA, EMMI…FGCV, TISA…WTLW, LQVL…MSLF, and VIGF…NAIG.

It belongs to the WTF family. Homomer. Forms protein aggregates. The two isoforms can interact with each other and with themselves. High sequence similarity is required for their interaction.

It is found in the spore membrane. Its subcellular location is the vacuole. It localises to the membrane. The protein localises to the ascus epiplasm. The protein resides in the cytoplasm. It is found in the endoplasmic reticulum. Functionally, promotes unequal transmission of alleles from the parental zygote to progeny spores by acting as poison/antidote system where the poison and antidote proteins are produced from the same locus; the poison component is trans-acting and targets all spores within an ascus whereas the antidote component is spore-specific, leading to poisoning of all progeny that do not inherit the allele. Localizes isoform 2 to the vacuole thereby facilitating its degradation. Its function is as follows. Forms toxic aggregates that disrupt spore maturation. The polypeptide is Meiotic driver cw27 (Schizosaccharomyces pombe (Fission yeast)).